The sequence spans 393 residues: Methylthioribose kinase (393 aa).

ATP-binding positions include N38, K53, and 107–109; that span reads EDL. Residue D225 coordinates substrate. 242–244 is a binding site for ATP; that stretch reads DPE. A substrate-binding site is contributed by R332.

The protein belongs to the methylthioribose kinase family. Homodimer.

The enzyme catalyses 5-(methylsulfanyl)-D-ribose + ATP = 5-(methylsulfanyl)-alpha-D-ribose 1-phosphate + ADP + H(+). Its pathway is amino-acid biosynthesis; L-methionine biosynthesis via salvage pathway; S-methyl-5-thio-alpha-D-ribose 1-phosphate from S-methyl-5'-thioadenosine (hydrolase route): step 2/2. Functionally, catalyzes the phosphorylation of methylthioribose into methylthioribose-1-phosphate. This chain is Methylthioribose kinase, found in Bacillus thuringiensis subsp. konkukian (strain 97-27).